The chain runs to 456 residues: Argininosuccinate lyase (456 aa).

It belongs to the lyase 1 family. Argininosuccinate lyase subfamily.

The protein localises to the cytoplasm. It carries out the reaction 2-(N(omega)-L-arginino)succinate = fumarate + L-arginine. It participates in amino-acid biosynthesis; L-arginine biosynthesis; L-arginine from L-ornithine and carbamoyl phosphate: step 3/3. This Listeria monocytogenes serotype 4a (strain HCC23) protein is Argininosuccinate lyase.